A 206-amino-acid polypeptide reads, in one-letter code: Large ribosomal subunit protein uL4 (206 aa).

The interval 48-97 is disordered; sequence THAVKNRSLVSGGGKKPWKQKHTGRARQGSTRASQWVGGGKAMGPKPRDY. Over residues 63-72 the composition is skewed to basic residues; the sequence is KPWKQKHTGR.

Belongs to the universal ribosomal protein uL4 family. Part of the 50S ribosomal subunit.

Functionally, one of the primary rRNA binding proteins, this protein initially binds near the 5'-end of the 23S rRNA. It is important during the early stages of 50S assembly. It makes multiple contacts with different domains of the 23S rRNA in the assembled 50S subunit and ribosome. Forms part of the polypeptide exit tunnel. In Anaeromyxobacter dehalogenans (strain 2CP-C), this protein is Large ribosomal subunit protein uL4.